The following is a 182-amino-acid chain: Alpha-S2-casein (182 aa).

Residues 1 to 15 (MKFFIFTCLLAVALA) form the signal peptide. Ser-22, Ser-23, and Ser-24 each carry phosphoserine.

It belongs to the alpha-casein family. In terms of tissue distribution, mammary gland specific. Secreted in milk.

It localises to the secreted. In terms of biological role, important role in the capacity of milk to transport calcium phosphate. The sequence is that of Alpha-S2-casein (CSN1S2) from Oryctolagus cuniculus (Rabbit).